The following is a 389-amino-acid chain: Probable L-tyrosine/L-aspartate decarboxylase (389 aa).

N6-(pyridoxal phosphate)lysine is present on Lys-233.

This sequence belongs to the group II decarboxylase family. MfnA subfamily. Requires pyridoxal 5'-phosphate as cofactor.

The enzyme catalyses L-tyrosine + H(+) = tyramine + CO2. It catalyses the reaction L-aspartate + H(+) = beta-alanine + CO2. Its pathway is cofactor biosynthesis; methanofuran biosynthesis. It functions in the pathway cofactor biosynthesis; coenzyme A biosynthesis. Functionally, catalyzes the decarboxylation of L-tyrosine to produce tyramine for methanofuran biosynthesis. Can also catalyze the decarboxylation of L-aspartate to produce beta-alanine for coenzyme A (CoA) biosynthesis. The polypeptide is Probable L-tyrosine/L-aspartate decarboxylase (Methanosphaera stadtmanae (strain ATCC 43021 / DSM 3091 / JCM 11832 / MCB-3)).